Here is a 198-residue protein sequence, read N- to C-terminus: MTDFTLNAQVRSDLGKGASRRLRHSLNIPAVVYGGDKEAQSLTIVAKEIAKLFENEAAFSHVIELNVDGAKQNVVVKAMQRHPAKGFIMHADFVRVVAGQKLTAVVPVHFINEEAPVKKGGEISHVESQIEVSCEAKDLPEFIEVDLGNAEIGTIIHLSDLKAPKGVEFVALAHGDDKAVANVHAPRVAPEAEEGAAE.

This sequence belongs to the bacterial ribosomal protein bL25 family. CTC subfamily. In terms of assembly, part of the 50S ribosomal subunit; part of the 5S rRNA/L5/L18/L25 subcomplex. Contacts the 5S rRNA. Binds to the 5S rRNA independently of L5 and L18.

In terms of biological role, this is one of the proteins that binds to the 5S RNA in the ribosome where it forms part of the central protuberance. The polypeptide is Large ribosomal subunit protein bL25 (Pseudomonas putida (strain W619)).